The sequence spans 455 residues: MNFDTIIIGGGMAGLSCALRCLEAGLKTAVIASGQSALHFSSGSIDVLAKTPSGKHVINPMDSLETFSKEYPSHPYAALGKETVERAINWYKTTLSAIGVPLTSQKDGLNHYRLTPLGTMKSTWLSQPFVHQFPMDLEKNKTQKMVLITIDGFRDFQPKLAQDNLKQITQLSDLEIATASISLSAFNDIQRNHCELRSIDISRLLSKRANRQELAYALQQHANPGDLVVLPSIFGNGTGLSYLREIEQLTKLTLCEVPTMPPSLLGIRLEESMKHAFIELGGTMLNGDHVVQGEFSYVDKSDPEHSHYRLNRLFTKNHGDFPLQAKQFVLATGSFFSQGLKANVDSMIEPIFGLDIAQSDKRTDWYSHDFFSTQSHPFLSMGIKTTANFQAIKSGHVIDNLYCAGAILSGYNPILEGSGSGVAISSGFHAAESIIEQLQCSDSLQNNNTKAEVAL.

Belongs to the anaerobic G-3-P dehydrogenase subunit B family. As to quaternary structure, composed of a catalytic GlpA/B dimer and of membrane bound GlpC. The cofactor is FMN.

It catalyses the reaction a quinone + sn-glycerol 3-phosphate = dihydroxyacetone phosphate + a quinol. It participates in polyol metabolism; glycerol degradation via glycerol kinase pathway; glycerone phosphate from sn-glycerol 3-phosphate (anaerobic route): step 1/1. Its function is as follows. Conversion of glycerol 3-phosphate to dihydroxyacetone. Uses fumarate or nitrate as electron acceptor. This is Anaerobic glycerol-3-phosphate dehydrogenase subunit B from Aliivibrio fischeri (strain ATCC 700601 / ES114) (Vibrio fischeri).